The chain runs to 343 residues: Anthranilate phosphoribosyltransferase (343 aa).

5-phospho-alpha-D-ribose 1-diphosphate-binding positions include Gly84, 87–88, Thr92, 94–97, 112–120, and Ser124; these read GD, NIST, and KHGNRSASS. Residue Gly84 participates in anthranilate binding. Ser96 provides a ligand contact to Mg(2+). Asn115 contributes to the anthranilate binding site. Arg170 provides a ligand contact to anthranilate. Residues Asp229 and Glu230 each coordinate Mg(2+).

This sequence belongs to the anthranilate phosphoribosyltransferase family. As to quaternary structure, homodimer. Mg(2+) is required as a cofactor.

The enzyme catalyses N-(5-phospho-beta-D-ribosyl)anthranilate + diphosphate = 5-phospho-alpha-D-ribose 1-diphosphate + anthranilate. It functions in the pathway amino-acid biosynthesis; L-tryptophan biosynthesis; L-tryptophan from chorismate: step 2/5. In terms of biological role, catalyzes the transfer of the phosphoribosyl group of 5-phosphorylribose-1-pyrophosphate (PRPP) to anthranilate to yield N-(5'-phosphoribosyl)-anthranilate (PRA). In Bordetella bronchiseptica (strain ATCC BAA-588 / NCTC 13252 / RB50) (Alcaligenes bronchisepticus), this protein is Anthranilate phosphoribosyltransferase.